The sequence spans 326 residues: MPLTSDVKEELSRVEVSKTTVRAAELATILRFSGGLHLISNRIAVESELDTPLLARRVRKDLAELYGVRSDISVIPASGMRRATHYLVRVMEGGETLARQTGLLDARRRPIRGLPNRLTTGSREEIAAVWRGAFLAAGTLTDPGRSAALEVTCPGNEAAMALVGAAGRLDVSAKAREVRGVHRVVIRDGDAIGQMLRVMGAQGTVVNWEEMRQRREVRATANRLVNFDDANLRRSAQAAVAACARVERAMEILGPDIPEHLKYAGDLRLRFRDSSLDELGHHADPPMTKDAVAGRIRRLLAMADKKAVDEGLPGTDANLPADLDDV.

The H-T-H motif DNA-binding region spans 275 to 308; that stretch reads SLDELGHHADPPMTKDAVAGRIRRLLAMADKKAV.

The protein belongs to the WhiA family.

Involved in cell division and chromosome segregation. The sequence is that of Probable cell division protein WhiA from Clavibacter michiganensis subsp. michiganensis (strain NCPPB 382).